We begin with the raw amino-acid sequence, 195 residues long: MKQRKAKITRKTKETNIVVEINLDNILLPSVSTTIGFLDHMLELFAVHSGIGFKIKASGDTHIDDHHLVEDAGITIGQALKEAVGDKKGIVRYGHFLLPMDETLSYVALDLAGRFYLSYEADIKFQKNGFNYDLIQEFFYALASNAGITLHIKMIKGRNNHHIAESIFKAFGRALRQAVSYSKSKKTVPSTKGIL.

Belongs to the imidazoleglycerol-phosphate dehydratase family.

The protein localises to the cytoplasm. The enzyme catalyses D-erythro-1-(imidazol-4-yl)glycerol 3-phosphate = 3-(imidazol-4-yl)-2-oxopropyl phosphate + H2O. Its pathway is amino-acid biosynthesis; L-histidine biosynthesis; L-histidine from 5-phospho-alpha-D-ribose 1-diphosphate: step 6/9. The sequence is that of Imidazoleglycerol-phosphate dehydratase from Endomicrobium trichonymphae.